A 398-amino-acid polypeptide reads, in one-letter code: MRARWGRRGARRGGPGLPGTHLALLAASLLSSSVAIYVCWKQLPPLPWASPSPPRPVNVLLWWEPFRGRHNPRRPPPDCQRRFNISGCVLHTDRAAYEEAQAVLFHHRDLVKGPPDWPPPWGVQMPPVEEREGLVMDDEGQEAEAETSAALGPRPAGQRWVWMNFESPSHSPGLQGLAGNIFNWTLSYRADSDIFVPYGYLYPRTHPSEQPPGLVPPLARKQGLVAWVVSNWDERQARVRYYRQLSQYVTVDVFGKGGPGQPLPDAELVHTVARYKFYLAFENSQHLDYITEKLWRNAFLAGAVPVVLGPNRTNYERFVPSNAFIHVDDFPSASSLAAHLQFLDRNPTVYRGYFRWRRSHAVHVTSFWDEPWCLACQAVQKAGNQRKSVPNLAGWFQQ.

Topologically, residues 1 to 15 are cytoplasmic; the sequence is MRARWGRRGARRGGP. The chain crosses the membrane as a helical; Signal-anchor for type II membrane protein span at residues 16-40; the sequence is GLPGTHLALLAASLLSSSVAIYVCW. Residues 41–398 lie on the Lumenal side of the membrane; sequence KQLPPLPWAS…VPNLAGWFQQ (358 aa). 3 N-linked (GlcNAc...) asparagine glycosylation sites follow: Asn-84, Asn-183, and Asn-311.

The protein belongs to the glycosyltransferase 10 family.

It is found in the golgi apparatus. It localises to the golgi stack membrane. The catalysed reaction is a beta-D-galactosyl-(1-&gt;4)-N-acetyl-beta-D-glucosaminyl derivative + GDP-beta-L-fucose = a beta-D-galactosyl-(1-&gt;4)-[alpha-L-fucosyl-(1-&gt;3)]-N-acetyl-beta-D-glucosaminyl derivative + GDP + H(+). It carries out the reaction an N-acetyl-alpha-neuraminyl-(2-&gt;3)-beta-D-galactosyl-(1-&gt;4)-N-acetyl-beta-D-glucosaminyl derivative + GDP-beta-L-fucose = an alpha-Neu5Ac-(2-&gt;3)-beta-D-Gal-(1-&gt;4)-[alpha-L-Fuc-(1-&gt;3)]-beta-D-GlcNAc derivative + GDP + H(+). It catalyses the reaction an alpha-Neu5Ac-(2-&gt;3)-beta-D-Gal-(1-&gt;4)-beta-D-GlcNAc-(1-&gt;3)-beta-D-Gal-(1-&gt;4)-beta-D-GlcNAc derivative + GDP-beta-L-fucose = an alpha-Neu5Ac-(2-&gt;3)-beta-D-Gal-(1-&gt;4)-beta-D-GlcNAc-(1-&gt;3)-beta-D-Gal-(1-&gt;4)-[alpha-L-Fuc-(1-&gt;3)]-beta-D-GlcNAc derivative + GDP + H(+). The enzyme catalyses an alpha-Neu5Ac-(2-&gt;3)-beta-D-Gal-(1-&gt;4)-beta-D-GlcNAc6S derivative + GDP-beta-L-fucose = an alpha-Neu5Ac-(2-&gt;3)-beta-D-Gal-(1-&gt;4)-[alpha-L-Fuc-(1-&gt;3)]-beta-D-GlcNAc6S derivative + GDP + H(+). It functions in the pathway protein modification; protein glycosylation. Catalyzes alpha(1-&gt;3) linkage of fucosyl moiety transferred from GDP-beta-L-fucose to N-acetyl glucosamine (GlcNAc) within type 2 lactosamine (LacNAc, Gal-beta(1-&gt;4)GlcNAc) glycan attached to N- or O-linked glycoproteins. Robustly fucosylates nonsialylated distal LacNAc unit of the polylactosamine chain to form Lewis X antigen (CD15), a glycan determinant known to mediate important cellular functions in development and immunity. Fucosylates with lower efficiency sialylated LacNAc acceptors to form sialyl Lewis X and 6-sulfo sialyl Lewis X determinants that serve as recognition epitopes for C-type lectins. Together with FUT7 contributes to SELE, SELL and SELP selectin ligand biosynthesis and selectin-dependent lymphocyte homing, leukocyte migration and blood leukocyte homeostasis. In a cell type specific manner, may also fucosylate the internal LacNAc unit of the polylactosamine chain to form VIM-2 antigen that serves as recognition epitope for SELE. This is Alpha-(1,3)-fucosyltransferase 4 (FUT4) from Bos taurus (Bovine).